The primary structure comprises 91 residues: Uteroglobin (91 aa).

The signal sequence occupies residues 1–21; that stretch reads MKLAVTLTLVTLALCCSSASA.

The protein belongs to the secretoglobin family. In terms of assembly, antiparallel homodimer; disulfide-linked. Interaction with LMBR1L has been observed in PubMed:16423471, but not in PubMed:23964685. As to expression, club cells (nonciliated cells of the surface epithelium of the pulmonary airways).

The protein localises to the secreted. Its function is as follows. Binds phosphatidylcholine, phosphatidylinositol, polychlorinated biphenyls (PCB) and weakly progesterone, potent inhibitor of phospholipase A2. The sequence is that of Uteroglobin (SCGB1A1) from Homo sapiens (Human).